Here is a 165-residue protein sequence, read N- to C-terminus: ATP synthase subunit b (165 aa).

Residues Ile5–Ile27 form a helical membrane-spanning segment.

Belongs to the ATPase B chain family. As to quaternary structure, F-type ATPases have 2 components, F(1) - the catalytic core - and F(0) - the membrane proton channel. F(1) has five subunits: alpha(3), beta(3), gamma(1), delta(1), epsilon(1). F(0) has three main subunits: a(1), b(2) and c(10-14). The alpha and beta chains form an alternating ring which encloses part of the gamma chain. F(1) is attached to F(0) by a central stalk formed by the gamma and epsilon chains, while a peripheral stalk is formed by the delta and b chains.

The protein localises to the cell membrane. Its function is as follows. F(1)F(0) ATP synthase produces ATP from ADP in the presence of a proton or sodium gradient. F-type ATPases consist of two structural domains, F(1) containing the extramembraneous catalytic core and F(0) containing the membrane proton channel, linked together by a central stalk and a peripheral stalk. During catalysis, ATP synthesis in the catalytic domain of F(1) is coupled via a rotary mechanism of the central stalk subunits to proton translocation. Component of the F(0) channel, it forms part of the peripheral stalk, linking F(1) to F(0). This Streptococcus thermophilus (strain CNRZ 1066) protein is ATP synthase subunit b.